Here is a 460-residue protein sequence, read N- to C-terminus: V-type ATP synthase beta chain (460 aa).

It belongs to the ATPase alpha/beta chains family.

Its function is as follows. Produces ATP from ADP in the presence of a proton gradient across the membrane. The V-type beta chain is a regulatory subunit. This is V-type ATP synthase beta chain from Dictyoglomus turgidum (strain DSM 6724 / Z-1310).